Reading from the N-terminus, the 571-residue chain is Proline--tRNA ligase (571 aa).

Belongs to the class-II aminoacyl-tRNA synthetase family. ProS type 1 subfamily. Homodimer.

It is found in the cytoplasm. It catalyses the reaction tRNA(Pro) + L-proline + ATP = L-prolyl-tRNA(Pro) + AMP + diphosphate. Catalyzes the attachment of proline to tRNA(Pro) in a two-step reaction: proline is first activated by ATP to form Pro-AMP and then transferred to the acceptor end of tRNA(Pro). As ProRS can inadvertently accommodate and process non-cognate amino acids such as alanine and cysteine, to avoid such errors it has two additional distinct editing activities against alanine. One activity is designated as 'pretransfer' editing and involves the tRNA(Pro)-independent hydrolysis of activated Ala-AMP. The other activity is designated 'posttransfer' editing and involves deacylation of mischarged Ala-tRNA(Pro). The misacylated Cys-tRNA(Pro) is not edited by ProRS. The sequence is that of Proline--tRNA ligase from Vibrio campbellii (strain ATCC BAA-1116).